A 341-amino-acid chain; its full sequence is Anthranilate phosphoribosyltransferase (341 aa).

Residues Gly81, 84–85 (GD), 91–94 (NVST), 109–117 (KHGNRSVSS), and Ser121 each bind 5-phospho-alpha-D-ribose 1-diphosphate. Gly81 provides a ligand contact to anthranilate. Residue Ser93 coordinates Mg(2+). Asn112 is a binding site for anthranilate. Arg167 is an anthranilate binding site. Residues Asp226 and Glu227 each contribute to the Mg(2+) site.

This sequence belongs to the anthranilate phosphoribosyltransferase family. As to quaternary structure, homodimer. It depends on Mg(2+) as a cofactor.

It carries out the reaction N-(5-phospho-beta-D-ribosyl)anthranilate + diphosphate = 5-phospho-alpha-D-ribose 1-diphosphate + anthranilate. It functions in the pathway amino-acid biosynthesis; L-tryptophan biosynthesis; L-tryptophan from chorismate: step 2/5. Catalyzes the transfer of the phosphoribosyl group of 5-phosphorylribose-1-pyrophosphate (PRPP) to anthranilate to yield N-(5'-phosphoribosyl)-anthranilate (PRA). The chain is Anthranilate phosphoribosyltransferase from Teredinibacter turnerae (strain ATCC 39867 / T7901).